We begin with the raw amino-acid sequence, 508 residues long: Maturase K (508 aa).

It belongs to the intron maturase 2 family. MatK subfamily.

The protein resides in the plastid. It localises to the chloroplast. In terms of biological role, usually encoded in the trnK tRNA gene intron. Probably assists in splicing its own and other chloroplast group II introns. The polypeptide is Maturase K (Gordonia lasianthus (Loblolly bay)).